We begin with the raw amino-acid sequence, 192 residues long: Ion-translocating oxidoreductase complex subunit B (192 aa).

The interval 1 to 26 (MNTIWIAVGALTLLGLVFGAILGYAS) is hydrophobic. Residues 32-91 (EDDPVVEKIDAILPQSQCGQCGYPGCRPYAEAVGLQGEKINRCAPGGEAVMLKIAELLNV) form the 4Fe-4S domain. [4Fe-4S] cluster is bound by residues Cys-49, Cys-52, Cys-57, Cys-74, Cys-117, Cys-120, Cys-123, Cys-127, Cys-147, Cys-150, Cys-153, and Cys-157. 4Fe-4S ferredoxin-type domains follow at residues 108-137 (MLAVIDENNCIGCTKCIQACPVDAIVGATR) and 138-167 (AMHTVMSDLCTGCNLCVDPCPTHCIELRPV).

This sequence belongs to the 4Fe4S bacterial-type ferredoxin family. RnfB subfamily. In terms of assembly, the complex is composed of six subunits: RsxA, RsxB, RsxC, RsxD, RsxE and RsxG. [4Fe-4S] cluster is required as a cofactor.

It is found in the cell inner membrane. Its function is as follows. Part of a membrane-bound complex that couples electron transfer with translocation of ions across the membrane. Required to maintain the reduced state of SoxR. This chain is Ion-translocating oxidoreductase complex subunit B, found in Salmonella dublin (strain CT_02021853).